Consider the following 430-residue polypeptide: Asparagine--tRNA ligase (430 aa).

It belongs to the class-II aminoacyl-tRNA synthetase family. As to quaternary structure, homodimer.

Its subcellular location is the cytoplasm. It catalyses the reaction tRNA(Asn) + L-asparagine + ATP = L-asparaginyl-tRNA(Asn) + AMP + diphosphate + H(+). This is Asparagine--tRNA ligase from Listeria monocytogenes serovar 1/2a (strain ATCC BAA-679 / EGD-e).